The primary structure comprises 421 residues: Diaminobutyrate--2-oxoglutarate transaminase (421 aa).

At Lys-262 the chain carries N6-(pyridoxal phosphate)lysine.

It belongs to the class-III pyridoxal-phosphate-dependent aminotransferase family. Pyridoxal 5'-phosphate is required as a cofactor.

The catalysed reaction is L-2,4-diaminobutanoate + 2-oxoglutarate = L-aspartate 4-semialdehyde + L-glutamate. It participates in amine and polyamine biosynthesis; ectoine biosynthesis; L-ectoine from L-aspartate 4-semialdehyde: step 1/3. In terms of biological role, catalyzes reversively the conversion of L-aspartate beta-semialdehyde (ASA) to L-2,4-diaminobutyrate (DABA) by transamination with L-glutamate. This chain is Diaminobutyrate--2-oxoglutarate transaminase (ectB), found in Vibrio parahaemolyticus serotype O3:K6 (strain RIMD 2210633).